The following is a 161-amino-acid chain: MRILGIDPGTRITGYGLIEKIGNRLLHVDNGAIYTRTDAPLADRLKTIYDGLSRVIADYAPTGVAVERIFVAKNALSALKLGHARGVAMLAGVNASLPVAEYTAVEVKQAVVGYGRAAKPQVQQMVRVLLNLPEIAQEDASDALAVAICHAHCFHLNDLLT.

Catalysis depends on residues Asp-7, Glu-67, and Asp-139. Residues Asp-7, Glu-67, and Asp-139 each coordinate Mg(2+).

Belongs to the RuvC family. As to quaternary structure, homodimer which binds Holliday junction (HJ) DNA. The HJ becomes 2-fold symmetrical on binding to RuvC with unstacked arms; it has a different conformation from HJ DNA in complex with RuvA. In the full resolvosome a probable DNA-RuvA(4)-RuvB(12)-RuvC(2) complex forms which resolves the HJ. Mg(2+) serves as cofactor.

The protein resides in the cytoplasm. The catalysed reaction is Endonucleolytic cleavage at a junction such as a reciprocal single-stranded crossover between two homologous DNA duplexes (Holliday junction).. In terms of biological role, the RuvA-RuvB-RuvC complex processes Holliday junction (HJ) DNA during genetic recombination and DNA repair. Endonuclease that resolves HJ intermediates. Cleaves cruciform DNA by making single-stranded nicks across the HJ at symmetrical positions within the homologous arms, yielding a 5'-phosphate and a 3'-hydroxyl group; requires a central core of homology in the junction. The consensus cleavage sequence is 5'-(A/T)TT(C/G)-3'. Cleavage occurs on the 3'-side of the TT dinucleotide at the point of strand exchange. HJ branch migration catalyzed by RuvA-RuvB allows RuvC to scan DNA until it finds its consensus sequence, where it cleaves and resolves the cruciform DNA. This is Crossover junction endodeoxyribonuclease RuvC from Syntrophotalea carbinolica (strain DSM 2380 / NBRC 103641 / GraBd1) (Pelobacter carbinolicus).